The sequence spans 306 residues: Curved DNA-binding protein (306 aa).

The J domain maps to 5 to 69 (DYYAIMGVKP…QRRAEYDQLW (65 aa)).

The protein localises to the cytoplasm. It is found in the nucleoid. Functionally, DNA-binding protein that preferentially recognizes a curved DNA sequence. It is probably a functional analog of DnaJ; displays overlapping activities with DnaJ, but functions under different conditions, probably acting as a molecular chaperone in an adaptive response to environmental stresses other than heat shock. Lacks autonomous chaperone activity; binds native substrates and targets them for recognition by DnaK. Its activity is inhibited by the binding of CbpM. The chain is Curved DNA-binding protein from Citrobacter koseri (strain ATCC BAA-895 / CDC 4225-83 / SGSC4696).